Consider the following 296-residue polypeptide: Glycine N-acyltransferase-like protein (296 aa).

Lysine 41 bears the N6-acetyllysine; alternate mark. Lysine 41 carries the N6-succinyllysine; alternate modification. Lysine 43 bears the N6-acetyllysine mark. Lysine 48 is subject to N6-acetyllysine; alternate. The residue at position 48 (lysine 48) is an N6-succinyllysine; alternate. N6-acetyllysine is present on residues lysine 80 and lysine 83. N6-acetyllysine; alternate occurs at positions 183 and 256. N6-succinyllysine; alternate occurs at positions 183 and 256.

This sequence belongs to the glycine N-acyltransferase family.

The protein localises to the mitochondrion. It carries out the reaction an acyl-CoA + glycine = an N-acylglycine + CoA + H(+). In terms of biological role, mitochondrial acyltransferase which transfers the acyl group to the N-terminus of glycine. Can conjugate a multitude of substrates to form a variety of N-acylglycines. The chain is Glycine N-acyltransferase-like protein (Gm4952) from Mus musculus (Mouse).